Consider the following 244-residue polypeptide: MSDWDLGELNALEKAQQTAALAAVNQQLESQTAEQRVAWALEHLPEQAVLSSSFGIQAAVSLRLVTRQRPDIPVILTDTGYLFPETYRFIDELTETLGLNLQIFRATTSPAWQEARYGKLWEQGVEGIERYNQLNKVEPMNRALATLGAGTWFAGLRREQSGSRAHLPVLAIQRGVFKLLPIIDWDNRQVYQYLTRHGLSYHPLWEQGYLSVGDTHTTRKCEPGMSEEETRFFGLKRECGLHEG.

Residue Cys-239 is the Nucleophile; cysteine thiosulfonate intermediate of the active site.

It belongs to the PAPS reductase family. CysH subfamily.

The protein localises to the cytoplasm. The catalysed reaction is [thioredoxin]-disulfide + sulfite + adenosine 3',5'-bisphosphate + 2 H(+) = [thioredoxin]-dithiol + 3'-phosphoadenylyl sulfate. It participates in sulfur metabolism; hydrogen sulfide biosynthesis; sulfite from sulfate: step 3/3. Catalyzes the formation of sulfite from phosphoadenosine 5'-phosphosulfate (PAPS) using thioredoxin as an electron donor. The chain is Phosphoadenosine 5'-phosphosulfate reductase from Sodalis glossinidius (strain morsitans).